A 156-amino-acid polypeptide reads, in one-letter code: Regulatory protein RecX (156 aa).

The protein belongs to the RecX family.

The protein localises to the cytoplasm. Modulates RecA activity. This chain is Regulatory protein RecX, found in Pseudomonas putida (strain W619).